A 173-amino-acid chain; its full sequence is MVRLKSRYILFEIIFPPTDTNVEESVSKADILLSHHRASPADVSIKSILQEIRRSLSLNLGDYGSAKCNSLLQLKYFSNKTSTGIIRCHREDCDLVIMALMLMSKIGDVDGLIVNPVKVSGTIKKIEQFAMRRNSKILNIIKCSQSSHLSDNDFIINDFKKIGRENENENEDD.

It belongs to the eukaryotic/archaeal RNase P protein component 2 family. In terms of assembly, component of nuclear RNase P and RNase MRP complexes. RNase P consists of an RNA moiety and at least 9 protein subunits including POP1, POP3, POP4, POP5, POP6, POP7, POP8, RPP1 and RPR2. RNase MRP complex consists of an RNA moiety and at least 10 protein subunits including POP1, POP3, POP4, POP5, POP6, POP7, POP8, RMP1, RPP1 and SNM1, many of which are shared with the RNase P complex.

It localises to the cytoplasm. Its subcellular location is the nucleus. The catalysed reaction is Endonucleolytic cleavage of RNA, removing 5'-extranucleotides from tRNA precursor.. Component of ribonuclease P, a protein complex that generates mature tRNA molecules by cleaving their 5'-ends. Also a component of RNase MRP, which cleaves pre-rRNA sequences. This chain is Ribonuclease P/MRP protein subunit POP5 (POP5), found in Saccharomyces cerevisiae (strain ATCC 204508 / S288c) (Baker's yeast).